The sequence spans 81 residues: Conotoxin Cl9.6 (81 aa).

Positions 1–20 (MSTLGMTLLILLLLLPLATP) are cleaved as a signal peptide. Residues 21–40 (DDVGQPPKRDTLRNLLKIGT) constitute a propeptide that is removed on maturation. 3 disulfide bridges follow: cysteine 46-cysteine 69, cysteine 54-cysteine 76, and cysteine 60-cysteine 78.

In terms of tissue distribution, expressed by the venom duct.

It is found in the secreted. This is Conotoxin Cl9.6 from Californiconus californicus (California cone).